The sequence spans 118 residues: Holin-like protein CidA 2 (118 aa).

4 consecutive transmembrane segments (helical) span residues Val4–Val26, Gly33–Leu52, Leu62–Leu84, and Ile91–Leu113.

Belongs to the CidA/LrgA family. CidA subfamily.

The protein resides in the cell membrane. Increases the activity of extracellular murein hydrolases possibly by mediating their export via hole formation. Inhibited by the antiholin-like proteins LrgAB. In an unstressed cell, the LrgAB products probably inhibit the function of the CidA protein. When a cell is stressed by the addition of antibiotics or by other factors in the environment, CidA possibly oligomerizes within the bacterial cell membrane, creating lesions that disrupt the proton motive force, which in turn results in loss of cell viability. These lesions are also hypothesized to regulate the subsequent cell lysis by either allowing the murein hydrolases access to the cell wall substrate and/or regulating their activity by a possible change in the cell wall pH that results from loss of membrane potential. The chain is Holin-like protein CidA 2 (cidA2) from Bacillus cereus (strain ATCC 14579 / DSM 31 / CCUG 7414 / JCM 2152 / NBRC 15305 / NCIMB 9373 / NCTC 2599 / NRRL B-3711).